Consider the following 219-residue polypeptide: Eukaryotic translation initiation factor 3 subunit K (219 aa).

In terms of domain architecture, PCI spans 43 to 205 (YDLEANLAVL…SVKPKNIVEK (163 aa)).

The protein belongs to the eIF-3 subunit K family. As to quaternary structure, component of the eukaryotic translation initiation factor 3 (eIF-3) complex, which is composed of 13 subunits: eif3a, eif3b, eif3c, eif3d, eif3e, eif3f, eif3g, eif3h, eif3i, eif3j, eif3k, eif3l and eif3m.

Its subcellular location is the nucleus. The protein resides in the cytoplasm. Component of the eukaryotic translation initiation factor 3 (eIF-3) complex, which is involved in protein synthesis of a specialized repertoire of mRNAs and, together with other initiation factors, stimulates binding of mRNA and methionyl-tRNAi to the 40S ribosome. The eIF-3 complex specifically targets and initiates translation of a subset of mRNAs involved in cell proliferation. This Danio rerio (Zebrafish) protein is Eukaryotic translation initiation factor 3 subunit K (eif3k).